Reading from the N-terminus, the 295-residue chain is Small ribosomal subunit protein uS2 (295 aa).

Ser2 is subject to N-acetylserine. Ser43 carries the phosphoserine modification. At Lys52 the chain carries N6-acetyllysine. The segment at 54–113 (TWEKLLLAARAIVAIENPADVSVISSRNTGQRAVLKFAAATGATPIAGRFTPGTFTNQIQ) is interaction with PPP1R16B. An N6-acetyllysine; alternate modification is found at Lys89. Lys89 participates in a covalent cross-link: Glycyl lysine isopeptide (Lys-Gly) (interchain with G-Cter in SUMO2); alternate. Thr97 bears the Phosphothreonine mark. Laminin-binding regions lie at residues 161–180 (IPCN…MLAR) and 205–229 (RDPE…EFQG). [DE]-W-[ST] repeat units lie at residues 230–232 (EWT), 247–249 (DWS), 266–268 (DWS), 275–277 (DWS), and 293–295 (EWS). The segment at 242–295 (QPEVADWSEGVQVPSVPIQQFPTEDWSAQPATEDWSAAPTAQATEWVGATTEWS) is laminin-binding. Positions 266–295 (DWSAQPATEDWSAAPTAQATEWVGATTEWS) are disordered.

It belongs to the universal ribosomal protein uS2 family. In terms of assembly, monomer (37LRP) and homodimer (67LR). Component of the small ribosomal subunit. Mature ribosomes consist of a small (40S) and a large (60S) subunit. The 40S subunit contains about 33 different proteins and 1 molecule of RNA (18S). The 60S subunit contains about 49 different proteins and 3 molecules of RNA (28S, 5.8S and 5S). Interacts with RPS21. Interacts with several laminins including at least LAMB1. Interacts with MDK. Interacts with PRNP. The mature dimeric form interacts with PPP1R16B (via its fourth ankyrin repeat). Interacts with PPP1CA only in the presence of PPP1R16B. Acylated. Acylation may be a prerequisite for conversion of the monomeric 37 kDa laminin receptor precursor (37LRP) to the mature dimeric 67 kDa laminin receptor (67LR), and may provide a mechanism for membrane association. Post-translationally, cleaved by stromelysin-3 (ST3) at the cell surface. Cleavage by stromelysin-3 may be a mechanism to alter cell-extracellular matrix interactions.

The protein resides in the cell membrane. Its subcellular location is the cytoplasm. It is found in the nucleus. Functionally, required for the assembly and/or stability of the 40S ribosomal subunit. Required for the processing of the 20S rRNA-precursor to mature 18S rRNA in a late step of the maturation of 40S ribosomal subunits. Also functions as a cell surface receptor for laminin. Plays a role in cell adhesion to the basement membrane and in the consequent activation of signaling transduction pathways. May play a role in cell fate determination and tissue morphogenesis. Also acts as a receptor for several other ligands, including the pathogenic prion protein, viruses, and bacteria. Acts as a PPP1R16B-dependent substrate of PPP1CA. Enables malignant tumor cells to penetrate laminin tissue and vessel barriers. Activates precursor thymic anti-OFA/iLRP specific cytotoxic T-cell. May induce CD8 T-suppressor cells secreting IL-10. The polypeptide is Small ribosomal subunit protein uS2 (Rpsa) (Mus musculus (Mouse)).